Consider the following 20-residue polypeptide: Protein C activator (20 aa).

The 20-residue stretch at 1-20 (VVGGDECNINEHRSLALMYA) folds into the Peptidase S1 domain.

It belongs to the peptidase S1 family. Snake venom subfamily. Monomer. In terms of processing, glycosylated. In terms of tissue distribution, expressed by the venom gland.

It is found in the secreted. Inhibited by calcium. Functionally, snake venom serine protease that selectively cleaves the heavy chain of protein C (PROC). This activation is thrombomodulin-independent. This Agkistrodon bilineatus (Cantil) protein is Protein C activator.